Here is an 826-residue protein sequence, read N- to C-terminus: Homeobox-leucine zipper protein HDG5 (826 aa).

Disordered regions lie at residues methionine 1 to proline 34 and glutamate 69 to threonine 119. Positions proline 23–proline 34 are enriched in low complexity. Residues glutamate 88–glutamate 105 show a composition bias toward basic and acidic residues. Residues alanine 110–threonine 119 show a composition bias toward basic residues. A DNA-binding region (homeobox) is located at residues lysine 111–glutamine 170. Residues glutamine 165–asparagine 189 adopt a coiled-coil conformation. The 245-residue stretch at alanine 314–serine 558 folds into the START domain.

It belongs to the HD-ZIP homeobox family. Class IV subfamily. As to expression, expressed in shoot apical meristem (SAM) with higher levels in L1 cells and the epidermal layer of young leaves. Expressed in the L1 of apical inflorescence meristems, early flower primordia, carpel and stamen filament epidermis, ovule primordia, nucellus and chalaze.

It is found in the nucleus. Functionally, probable transcription factor. Involved, together with PDF2, in the regulation of flower organs development by promoting the expression of APETALA 3 (AP3) in the epidermis and internal cell layers of developing flowers. This chain is Homeobox-leucine zipper protein HDG5, found in Arabidopsis thaliana (Mouse-ear cress).